The sequence spans 407 residues: 41 kDa spicule matrix protein (407 aa).

The N-terminal stretch at 1-17 is a signal peptide; that stretch reads MKGVLFIVASLVAFATG. The region spanning 29–160 is the C-type lectin domain; the sequence is SGQSCYRYFN…PGRAPVMKRQ (132 aa). Disordered regions lie at residues 143 to 176 and 204 to 407; these read PQNP…IPQG and IGQQ…DALA. Residues 223–369 are compositionally biased toward gly residues; that stretch reads NQPGMGGRQP…MGGRQPGMGG (147 aa). Positions 370-398 are enriched in low complexity; the sequence is QQPNNPNNPNNPNNPNNPNNPNPRFNRPR.

The protein belongs to the SM50 family. As to expression, expressed specifically in the micromere/primary mesenchyme cells (PMC) lineage.

Its subcellular location is the secreted. In terms of biological role, major matrix protein of the sea urchin embryo spicule which directs crystal growth in certain orientations and inhibit growth in others. The sequence is that of 41 kDa spicule matrix protein from Hemicentrotus pulcherrimus (Sea urchin).